A 121-amino-acid polypeptide reads, in one-letter code: Small ribosomal subunit protein uS13 (121 aa).

The disordered stretch occupies residues 91-121; the sequence is HRMSLPVRGQRTRTNARTRRGSRKTVAGRKK. Residues 100 to 121 show a composition bias toward basic residues; sequence QRTRTNARTRRGSRKTVAGRKK.

Belongs to the universal ribosomal protein uS13 family. In terms of assembly, part of the 30S ribosomal subunit. Forms a loose heterodimer with protein S19. Forms two bridges to the 50S subunit in the 70S ribosome.

In terms of biological role, located at the top of the head of the 30S subunit, it contacts several helices of the 16S rRNA. In the 70S ribosome it contacts the 23S rRNA (bridge B1a) and protein L5 of the 50S subunit (bridge B1b), connecting the 2 subunits; these bridges are implicated in subunit movement. Contacts the tRNAs in the A and P-sites. The protein is Small ribosomal subunit protein uS13 of Prochlorococcus marinus (strain AS9601).